The chain runs to 150 residues: Ribosome maturation factor RimP (150 aa).

Belongs to the RimP family.

It localises to the cytoplasm. Required for maturation of 30S ribosomal subunits. This chain is Ribosome maturation factor RimP, found in Acaryochloris marina (strain MBIC 11017).